Consider the following 422-residue polypeptide: Carboxypeptidase B2 (422 aa).

An N-terminal signal peptide occupies residues 1 to 21 (MKLYGLGVLVAIILYEKHGLA). A propeptide spans 22–113 (FQSGHVLSAL…QTSNDTVSPR (92 aa)) (activation peptide). Asn-43, Asn-72, Asn-84, and Asn-107 each carry an N-linked (GlcNAc...) asparagine glycan. One can recognise a Peptidase M14 domain in the interval 121–418 (QYHSLNEIYS…AAVSKIAWHV (298 aa)). A disulfide bridge links Cys-177 with Cys-190. 2 residues coordinate Zn(2+): His-180 and Glu-183. Substrate contacts are provided by residues 180–183 (HARE) and Arg-238. An N-linked (GlcNAc...) asparagine glycan is attached at Asn-240. 2 disulfide bridges follow: Cys-249-Cys-273 and Cys-264-Cys-278. 255–256 (NR) is a substrate binding site. Zn(2+) is bound at residue His-309. Residue 310–311 (SY) participates in substrate binding. A glycan (N-linked (GlcNAc...) asparagine) is linked at Asn-322. Position 362 (Tyr-362) interacts with substrate. Residue Glu-384 is the Proton donor/acceptor of the active site.

It belongs to the peptidase M14 family. Zn(2+) is required as a cofactor. Plasma; synthesized in the liver.

The protein resides in the secreted. It catalyses the reaction Release of C-terminal Arg and Lys from a polypeptide.. Its activity is regulated as follows. TAFI/CPB2 is unique among carboxypeptidases in that it spontaneously inactivates with a short half-life, a property that is crucial for its role in controlling blood clot lysis. The zymogen is stabilized by interactions with the activation peptide. Release of the activation peptide increases a dynamic flap mobility and in time this leads to conformational changes that disrupt the catalytic site and expose a cryptic thrombin-cleavage site present at Arg-323. Its function is as follows. Cleaves C-terminal arginine or lysine residues from biologically active peptides such as kinins or anaphylatoxins in the circulation thereby regulating their activities. Down-regulates fibrinolysis by removing C-terminal lysine residues from fibrin that has already been partially degraded by plasmin. The protein is Carboxypeptidase B2 (Cpb2) of Rattus norvegicus (Rat).